Here is a 223-residue protein sequence, read N- to C-terminus: Translation initiation factor 6 (223 aa).

The protein belongs to the eIF-6 family.

In terms of biological role, binds to the 50S ribosomal subunit and prevents its association with the 30S ribosomal subunit to form the 70S initiation complex. This Saccharolobus islandicus (strain Y.N.15.51 / Yellowstone #2) (Sulfolobus islandicus) protein is Translation initiation factor 6.